We begin with the raw amino-acid sequence, 159 residues long: Transcriptional repressor NrdR (159 aa).

A zinc finger spans residues 3–34; it reads CPFCRHDDTQVVDSRVSEDGAAIRRRRRCSAC. Residues 49–139 enclose the ATP-cone domain; sequence PAVVKKDGSR…VYRRFEDVSE (91 aa).

The protein belongs to the NrdR family. Zn(2+) is required as a cofactor.

In terms of biological role, negatively regulates transcription of bacterial ribonucleotide reductase nrd genes and operons by binding to NrdR-boxes. This is Transcriptional repressor NrdR from Burkholderia pseudomallei (strain 1106a).